The chain runs to 467 residues: Chromosomal replication initiator protein DnaA (467 aa).

The interval 1 to 74 is domain I, interacts with DnaA modulators; the sequence is MSADVWSQGC…ESVLSDLAGK (74 aa). Positions 74-130 are domain II; that stretch reads KPVRLDLQLAAREAPPRPSSDAPRSNGHPQAAGQWLGAPSSSNAGAYTQASAPTPTH. The interval 85–127 is disordered; the sequence is REAPPRPSSDAPRSNGHPQAAGQWLGAPSSSNAGAYTQASAPT. The segment covering 112-127 has biased composition (polar residues); it reads PSSSNAGAYTQASAPT. The interval 131–347 is domain III, AAA+ region; that stretch reads RLNTALTFDT…GALRKVLAYA (217 aa). ATP contacts are provided by Gly175, Gly177, Lys178, and Thr179. Residues 348 to 467 are domain IV, binds dsDNA; the sequence is RFSQKDINIA…LHVLEQTLKG (120 aa).

Belongs to the DnaA family. As to quaternary structure, oligomerizes as a right-handed, spiral filament on DNA at oriC.

It is found in the cytoplasm. Its function is as follows. Plays an essential role in the initiation and regulation of chromosomal replication. ATP-DnaA binds to the origin of replication (oriC) to initiate formation of the DNA replication initiation complex once per cell cycle. Binds the DnaA box (a 9 base pair repeat at the origin) and separates the double-stranded (ds)DNA. Forms a right-handed helical filament on oriC DNA; dsDNA binds to the exterior of the filament while single-stranded (ss)DNA is stabiized in the filament's interior. The ATP-DnaA-oriC complex binds and stabilizes one strand of the AT-rich DNA unwinding element (DUE), permitting loading of DNA polymerase. After initiation quickly degrades to an ADP-DnaA complex that is not apt for DNA replication. Binds acidic phospholipids. The chain is Chromosomal replication initiator protein DnaA from Methylibium petroleiphilum (strain ATCC BAA-1232 / LMG 22953 / PM1).